Consider the following 553-residue polypeptide: Neutral amino acid transporter B(0) (553 aa).

Residue Met1 is modified to N-acetylmethionine. Over 1–50 (MAVDPPKADPKGVAVDSSRRCPALGSREDQSAKAGGCCGSRDRVRRCIRA) the chain is Cytoplasmic. A helical membrane pass occupies residues 51-80 (NLLVLLTVAAVVAGVGLGLGVSAAGGADAL). Residues 81 to 93 (GPARLTRFAFPGE) lie on the Extracellular side of the membrane. The helical transmembrane segment at 94–115 (LLLRLLKMIILPLVVCSLIGGA) threads the bilayer. Over 116-129 (ASLDPSALGRVGAW) the chain is Cytoplasmic. The chain crosses the membrane as a helical span at residues 130-152 (ALLFFLVTTLLASALGVGLALAL). Topologically, residues 153–236 (KPGAAVTAIT…INSTMVQLLC (84 aa)) are extracellular. 2 N-linked (GlcNAc...) asparagine glycosylation sites follow: Asn165 and Asn228. Residues 237–260 (EVEGMNILGLVVFAIVFGVALRKL) form a helical membrane-spanning segment. The Cytoplasmic segment spans residues 261–269 (GPEGELLIR). A helical transmembrane segment spans residues 270 to 297 (FFNSFNDATMVLVSWIMWYAPVGILFLV). The Extracellular portion of the chain corresponds to 298 to 318 (ASKIVEMKDVRQLFISLGKYI). A helical transmembrane segment spans residues 319 to 340 (LCCLLGHAIHGLLVLPLIYFLF). The Cytoplasmic segment spans residues 341 to 345 (TRKNP). The segment at residues 346 to 376 (YRFLWGIMTPLATAFGTSSSSATLPLMMKCV) is an intramembrane region (discontinuously helical). Topologically, residues 377-385 (EEKNGVAKH) are cytoplasmic. A helical transmembrane segment spans residues 386–412 (ISRFILPIGATVNMDGAALFQCVAAVF). Residues Gly394, Thr396, and Asn398 each coordinate Na(+). Over 413-425 (IAQLNGVSLDFVK) the chain is Extracellular. Residues 426 to 459 (IITILVTATASSVGAAGIPAGGVLTLAIILEAVS) constitute an intramembrane region (discontinuously helical). At 460 to 472 (LPVKDISLILAVD) the chain is on the extracellular side. Residues 473-494 (WLVDRSCTVLNVEGDAFGAGLL) form a helical membrane-spanning segment. Na(+)-binding residues include Asn483 and Asp487. The Cytoplasmic portion of the chain corresponds to 495-553 (QSYVDRTKMPSSEPELIQVKNEVSLNPLPLATEEGNPLLKQYQGPTGDSSATFEKESVM). 5 positions are modified to phosphoserine: Ser505, Ser506, Ser518, Ser543, and Ser551. The segment at 531-553 (PLLKQYQGPTGDSSATFEKESVM) is disordered. A compositionally biased stretch (polar residues) spans 537-546 (QGPTGDSSAT).

Belongs to the dicarboxylate/amino acid:cation symporter (DAACS) (TC 2.A.23) family. SLC1A5 subfamily. In terms of assembly, homotrimer. Highly expressed in adipose tissue. Detected in lung, skeletal muscle, large intestine, kidney and testis. Expressed in lung, brain, kidney and neural retina (at protein level). Expressed in Mueller cells (at protein level).

It localises to the cell membrane. It is found in the melanosome. The enzyme catalyses L-glutamine(out) + L-serine(in) + Na(+)(out) = L-glutamine(in) + L-serine(out) + Na(+)(in). It carries out the reaction L-glutamine(in) + L-serine(out) + Na(+)(out) = L-glutamine(out) + L-serine(in) + Na(+)(in). It catalyses the reaction L-threonine(in) + L-glutamine(out) + Na(+)(out) = L-threonine(out) + L-glutamine(in) + Na(+)(in). The catalysed reaction is L-threonine(out) + L-glutamine(in) + Na(+)(out) = L-threonine(in) + L-glutamine(out) + Na(+)(in). The enzyme catalyses L-asparagine(in) + L-glutamine(out) + Na(+)(out) = L-asparagine(out) + L-glutamine(in) + Na(+)(in). It carries out the reaction L-asparagine(out) + L-glutamine(in) + Na(+)(out) = L-asparagine(in) + L-glutamine(out) + Na(+)(in). It catalyses the reaction L-glutamine(in) + L-alanine(out) + Na(+)(out) = L-glutamine(out) + L-alanine(in) + Na(+)(in). The catalysed reaction is L-valine(out) + L-glutamine(in) + Na(+)(out) = L-valine(in) + L-glutamine(out) + Na(+)(in). The enzyme catalyses L-glutamine(in) + L-methionine(out) + Na(+)(out) = L-glutamine(out) + L-methionine(in) + Na(+)(in). It carries out the reaction L-glutamine(in) + L-glutamate(out) + Na(+)(out) + H(+)(out) = L-glutamine(out) + L-glutamate(in) + Na(+)(in) + H(+)(in). It catalyses the reaction D-serine(in) + L-glutamine(out) + Na(+)(out) = D-serine(out) + L-glutamine(in) + Na(+)(in). The catalysed reaction is D-serine(in) + L-alanine(out) + Na(+)(out) = D-serine(out) + L-alanine(in) + Na(+)(in). The enzyme catalyses nitrate(in) = nitrate(out). It carries out the reaction iodide(out) = iodide(in). It catalyses the reaction thiocyanate(in) = thiocyanate(out). With respect to regulation, down-regulated at acidic pH, with the exception of L-glutamate transport which is up-regulated instead. In terms of biological role, sodium-coupled antiporter of neutral amino acids. In a tri-substrate transport cycle, exchanges neutral amino acids between the extracellular and intracellular compartments, coupled to the inward cotransport of at least one sodium ion. The preferred substrate is the essential amino acid L-glutamine, a precursor for biosynthesis of proteins, nucleotides and amine sugars as well as an alternative fuel for mitochondrial oxidative phosphorylation. Exchanges L-glutamine with other neutral amino acids such as L-serine, L-threonine and L-asparagine in a bidirectional way. Provides L-glutamine to proliferating stem and activated cells driving the metabolic switch toward cell differentiation. The transport cycle is usually pH-independent, with the exception of L-glutamate. Transports extracellular L-glutamate coupled to the cotransport of one proton and one sodium ion in exchange for intracellular L-glutamine counter-ion. May provide for L-glutamate uptake in glial cells regulating glutamine/glutamate cycle in the nervous system. Can transport D-amino acids. Mediates D-serine release from the retinal glia potentially affecting NMDA receptor function in retinal neurons. Displays sodium- and amino acid-dependent but uncoupled channel-like anion conductance with a preference SCN(-) &gt;&gt; NO3(-) &gt; I(-) &gt; Cl(-). Through binding of the fusogenic protein syncytin-1/ERVW-1 may mediate trophoblasts syncytialization, the spontaneous fusion of their plasma membranes, an essential process in placental development. This is Neutral amino acid transporter B(0) (Slc1a5) from Mus musculus (Mouse).